Reading from the N-terminus, the 120-residue chain is Late cornified envelope-like proline-rich protein 1 (120 aa).

This sequence belongs to the cornifin (SPRR) family.

The chain is Late cornified envelope-like proline-rich protein 1 (Lelp1) from Mus musculus (Mouse).